A 610-amino-acid polypeptide reads, in one-letter code: DNA mismatch repair protein MutL (610 aa).

Belongs to the DNA mismatch repair MutL/HexB family.

Functionally, this protein is involved in the repair of mismatches in DNA. It is required for dam-dependent methyl-directed DNA mismatch repair. May act as a 'molecular matchmaker', a protein that promotes the formation of a stable complex between two or more DNA-binding proteins in an ATP-dependent manner without itself being part of a final effector complex. The sequence is that of DNA mismatch repair protein MutL from Rickettsia rickettsii (strain Sheila Smith).